We begin with the raw amino-acid sequence, 351 residues long: tRNA N6-adenosine threonylcarbamoyltransferase (351 aa).

Fe cation is bound by residues histidine 124 and histidine 128. Substrate is bound by residues 146–150 (LVSGG), aspartate 180, glycine 193, aspartate 197, and asparagine 285. Aspartate 313 serves as a coordination point for Fe cation.

This sequence belongs to the KAE1 / TsaD family. Fe(2+) is required as a cofactor.

It is found in the cytoplasm. It catalyses the reaction L-threonylcarbamoyladenylate + adenosine(37) in tRNA = N(6)-L-threonylcarbamoyladenosine(37) in tRNA + AMP + H(+). Functionally, required for the formation of a threonylcarbamoyl group on adenosine at position 37 (t(6)A37) in tRNAs that read codons beginning with adenine. Is involved in the transfer of the threonylcarbamoyl moiety of threonylcarbamoyl-AMP (TC-AMP) to the N6 group of A37, together with TsaE and TsaB. TsaD likely plays a direct catalytic role in this reaction. In Mycobacterium leprae (strain TN), this protein is tRNA N6-adenosine threonylcarbamoyltransferase.